The following is a 388-amino-acid chain: Pepsin A-2/A-3 (388 aa).

Residues 1–15 (MKWLLLLGLVALSEC) form the signal peptide. 2 propeptides (activation peptide) span residues 16-40 (IIHK…LLKD) and 41-62 (FLKK…APTL). In terms of domain architecture, Peptidase A1 spans 76–385 (YFGTIGIGTP…DRANNQVGLA (310 aa)). The active site involves Asp94. The cysteines at positions 107 and 112 are disulfide-linked. A Phosphoserine modification is found at Ser130. An intrachain disulfide couples Cys268 to Cys272. Asp277 is a catalytic residue. An intrachain disulfide couples Cys311 to Cys344.

This sequence belongs to the peptidase A1 family. Post-translationally, pepsin A-2 is phosphorylated, but not pepsin A-3. In terms of processing, each pepsinogen is converted to corresponding pepsin at pH 2.0 in part as a result of the release of a 47 AA activation segment and in part as a result of stepwise proteolytic cleavage via an intermediate form(s).

It localises to the secreted. It catalyses the reaction Preferential cleavage: hydrophobic, preferably aromatic, residues in P1 and P1' positions. Cleaves 1-Phe-|-Val-2, 4-Gln-|-His-5, 13-Glu-|-Ala-14, 14-Ala-|-Leu-15, 15-Leu-|-Tyr-16, 16-Tyr-|-Leu-17, 23-Gly-|-Phe-24, 24-Phe-|-Phe-25 and 25-Phe-|-Tyr-26 bonds in the B chain of insulin.. Functionally, shows particularly broad specificity; although bonds involving phenylalanine and leucine are preferred, many others are also cleaved to some extent. This Macaca fuscata fuscata (Japanese macaque) protein is Pepsin A-2/A-3.